Reading from the N-terminus, the 392-residue chain is MERLSGCRLRPWMLLLLLFPVQGRQKDSGSKWKVFIDQINRALENYEPCSSQNCSCYHGVIEEDLTPFRGGISRKMMAEVVRRRLGTHYQIIKHRLFREDDCMFPSRCSGVEHFILEVIRRLPDMEMVINVRDYPQVPKWMEPTIPVFSFSKTSEYHDIMYPAWTFWEGGPAVWPLYPTGLGRWDLFREDLLRSAAQWPWEKKNSTAYFRGSRTSPERDPLILLSRKNPKLVDAEYTKNQAWKSMKDTLGKPAAKDVHLIDHCKYKYLFNFRGVAASFRFKHLFLCGSLVFHVGDEWVEFFYPQLKPWVHYIPVKTDLSDVQELLQFVKANDDLAQEIAKRGSQFIINHLQMDDITCYWENLLTEYSKFLSYNVTRRKDYYQIIPRRLKTEL.

Residues 1-23 form the signal peptide; sequence MERLSGCRLRPWMLLLLLFPVQG. Intrachain disulfides connect Cys49–Cys56, Cys54–Cys357, Cys102–Cys108, and Cys263–Cys286. The N-linked (GlcNAc...) asparagine glycan is linked to Asn53. The interval 103–107 is interaction with the consensus sequence C-X-S-X-[PA]-C in peptide substrates; sequence MFPSR. The active-site Proton donor/acceptor is the Asp133. Residues 172 to 178 form an interaction with the consensus sequence C-X-S-X-[PA]-C in peptide substrates region; the sequence is AVWPLYP. Tyr177 contributes to the UDP-alpha-D-glucose binding site. An N-linked (GlcNAc...) asparagine glycan is attached at Asn204. UDP-alpha-D-glucose-binding positions include Ser212, Arg218, and 274-279; that span reads VAASFR. Residue Asn373 is glycosylated (N-linked (GlcNAc...) asparagine). Residues 389–392 carry the Prevents secretion from ER motif; it reads KTEL.

This sequence belongs to the glycosyltransferase 90 family.

The protein localises to the endoplasmic reticulum lumen. It catalyses the reaction L-seryl-[EGF-like domain protein] + UDP-alpha-D-xylose = 3-O-(beta-D-xylosyl)-L-seryl-[EGF-like domain protein] + UDP + H(+). The enzyme catalyses L-seryl-[EGF-like domain protein] + UDP-alpha-D-glucose = 3-O-(beta-D-glucosyl)-L-seryl-[EGF-like domain protein] + UDP + H(+). It participates in protein modification; protein glycosylation. Dual specificity glycosyltransferase that catalyzes the transfer of glucose and xylose from UDP-glucose and UDP-xylose, respectively, to a serine residue found in the consensus sequence of C-X-S-X-P-C. Specifically targets extracellular EGF repeats of protein such as CRB2, F7, F9 and NOTCH2. Acts as a positive regulator of Notch signaling by mediating O-glucosylation of Notch, leading to regulate muscle development. Notch glucosylation does not affect Notch ligand binding. Required during early development to promote gastrulation: acts by mediating O-glucosylation of CRB2, which is required for CRB2 localization to the cell membrane. The polypeptide is Protein O-glucosyltransferase 1 (Poglut1) (Rattus norvegicus (Rat)).